A 147-amino-acid polypeptide reads, in one-letter code: Angiogenin (147 aa).

The first 24 residues, 1 to 24 (MVILLGPLLLVFMLGLGLAPLSLA), serve as a signal peptide directing secretion. Catalysis depends on His-37, which acts as the Proton acceptor. The tRNA site is built by Arg-45 and Asp-46. Cystine bridges form between Cys-50–Cys-104, Cys-63–Cys-115, and Cys-81–Cys-130. The short motif at 55-59 (KQRGL) is the Nucleolar localization signal element. Cys-104 and Ile-126 together coordinate tRNA. His-137 (proton donor) is an active-site residue.

It belongs to the pancreatic ribonuclease family. As to quaternary structure, homodimer. Interacts with RNH1; inhibiting ANG ribonuclease activity. Interacts with PCNA.

The protein resides in the secreted. It is found in the nucleus. Its subcellular location is the nucleolus. The protein localises to the cytoplasm. It localises to the stress granule. With respect to regulation, has weak tRNA ribonuclease activity by itself due to partial autoinhibition by its C-terminus, which folds into a short alpha-helix that partially occludes the substrate-binding site. In absence of stress, the ribonuclease activity is inhibited by RNH1 in the cytoplasm. In response to stress, dissociates from RNH1 in the cytoplasm and associates with cytoplasmic ribosomes with vacant A-sites: ribosomes directly activate the tRNA ribonuclease activity of ANG by refolding the C-terminal alpha-helix. In response to stress, the angiogenic activity of ANG is inhibited by RNH1 in the nucleus. Secreted ribonuclease that can either promote or restrict cell proliferation of target cells, depending on the context. Endocytosed in target cells via its receptor PLXNB2 and translocates to the cytoplasm or nucleus. Under stress conditions, localizes to the cytoplasm and promotes the assembly of stress granules (SGs): specifically cleaves a subset of tRNAs within anticodon loops to produce tRNA-derived stress-induced fragments (tiRNAs), resulting in translation repression and inhibition of cell proliferation. tiRNas also prevent formation of apoptosome, thereby promoting cell survival. Preferentially cleaves RNAs between a pyrimidine and an adenosine residue, suggesting that it cleaves the anticodon loop of tRNA(Ala) (32-UUAGCAU-38) after positions 33 and 36. Cleaves a subset of tRNAs, including tRNA(Ala), tRNA(Glu), tRNA(Gly), tRNA(Lys), tRNA(Val), tRNA(His), tRNA(Asp) and tRNA(Sec). Under growth conditions and in differentiated cells, translocates to the nucleus and stimulates ribosomal RNA (rRNA) transcription, including that containing the initiation site sequences of 45S rRNA, thereby promoting cell growth and proliferation. Angiogenin induces vascularization of normal and malignant tissues via its ability to promote rRNA transcription. Involved in hematopoietic stem and progenitor cell (HSPC) growth and survival by promoting rRNA transcription in growth conditions and inhibiting translation in response to stress, respectively. Mediates the crosstalk between myeloid and intestinal epithelial cells to protect the intestinal epithelial barrier integrity: secreted by myeloid cells and promotes intestinal epithelial cells proliferation and survival. Also mediates osteoclast-endothelial cell crosstalk in growing bone: produced by osteoclasts and protects the neighboring vascular cells against senescence by promoting rRNA transcription. This chain is Angiogenin (ANG), found in Sus scrofa (Pig).